Reading from the N-terminus, the 370-residue chain is Histidinol-phosphate aminotransferase 2 (370 aa).

Lysine 230 is modified (N6-(pyridoxal phosphate)lysine).

This sequence belongs to the class-II pyridoxal-phosphate-dependent aminotransferase family. Histidinol-phosphate aminotransferase subfamily. In terms of assembly, homodimer. Requires pyridoxal 5'-phosphate as cofactor.

The catalysed reaction is L-histidinol phosphate + 2-oxoglutarate = 3-(imidazol-4-yl)-2-oxopropyl phosphate + L-glutamate. The protein operates within amino-acid biosynthesis; L-histidine biosynthesis; L-histidine from 5-phospho-alpha-D-ribose 1-diphosphate: step 7/9. The chain is Histidinol-phosphate aminotransferase 2 from Pseudomonas fluorescens (strain ATCC BAA-477 / NRRL B-23932 / Pf-5).